A 229-amino-acid chain; its full sequence is MAQQAQLGLQDAASPIMEELIHFHDHTLTVVFLISVLIFYLIIVMVTTTFMNKHSLDSQEVEIVWTVMPAIVLITIALPSLRILYLTDEISNPHLTIKAVGHQWYWSYEYTDYHQMEFDSYMIPTNELEPGGIRLLDVDHRIVVPMESPVRMLITSEDVIHSWTIPSLGTKVDAVPGRLNQATFITTRPGLFFGQCSEICGANHSFMPIALEAVPLSNFENWTTKVLAS.

At 1-14 (MAQQAQLGLQDAAS) the chain is on the mitochondrial intermembrane side. A helical membrane pass occupies residues 15–45 (PIMEELIHFHDHTLTVVFLISVLIFYLIIVM). The Mitochondrial matrix portion of the chain corresponds to 46–59 (VTTTFMNKHSLDSQ). Residues 60–87 (EVEIVWTVMPAIVLITIALPSLRILYLT) form a helical membrane-spanning segment. Residues 88 to 229 (DEISNPHLTI…ENWTTKVLAS (142 aa)) are Mitochondrial intermembrane-facing. Cu cation is bound by residues His161, Cys196, Glu198, Cys200, His204, and Met207. Glu198 contacts Mg(2+).

The protein belongs to the cytochrome c oxidase subunit 2 family. As to quaternary structure, component of the cytochrome c oxidase (complex IV, CIV), a multisubunit enzyme composed of 14 subunits. The complex is composed of a catalytic core of 3 subunits MT-CO1, MT-CO2 and MT-CO3, encoded in the mitochondrial DNA, and 11 supernumerary subunits COX4I, COX5A, COX5B, COX6A, COX6B, COX6C, COX7A, COX7B, COX7C, COX8 and NDUFA4, which are encoded in the nuclear genome. The complex exists as a monomer or a dimer and forms supercomplexes (SCs) in the inner mitochondrial membrane with NADH-ubiquinone oxidoreductase (complex I, CI) and ubiquinol-cytochrome c oxidoreductase (cytochrome b-c1 complex, complex III, CIII), resulting in different assemblies (supercomplex SCI(1)III(2)IV(1) and megacomplex MCI(2)III(2)IV(2)). Found in a complex with TMEM177, COA6, COX18, COX20, SCO1 and SCO2. Interacts with TMEM177 in a COX20-dependent manner. Interacts with COX20. Interacts with COX16. Cu cation serves as cofactor.

It localises to the mitochondrion inner membrane. It catalyses the reaction 4 Fe(II)-[cytochrome c] + O2 + 8 H(+)(in) = 4 Fe(III)-[cytochrome c] + 2 H2O + 4 H(+)(out). Component of the cytochrome c oxidase, the last enzyme in the mitochondrial electron transport chain which drives oxidative phosphorylation. The respiratory chain contains 3 multisubunit complexes succinate dehydrogenase (complex II, CII), ubiquinol-cytochrome c oxidoreductase (cytochrome b-c1 complex, complex III, CIII) and cytochrome c oxidase (complex IV, CIV), that cooperate to transfer electrons derived from NADH and succinate to molecular oxygen, creating an electrochemical gradient over the inner membrane that drives transmembrane transport and the ATP synthase. Cytochrome c oxidase is the component of the respiratory chain that catalyzes the reduction of oxygen to water. Electrons originating from reduced cytochrome c in the intermembrane space (IMS) are transferred via the dinuclear copper A center (CU(A)) of subunit 2 and heme A of subunit 1 to the active site in subunit 1, a binuclear center (BNC) formed by heme A3 and copper B (CU(B)). The BNC reduces molecular oxygen to 2 water molecules using 4 electrons from cytochrome c in the IMS and 4 protons from the mitochondrial matrix. The sequence is that of Cytochrome c oxidase subunit 2 (MT-CO2) from Petromyzon marinus (Sea lamprey).